We begin with the raw amino-acid sequence, 313 residues long: Aspartate carbamoyltransferase catalytic subunit (313 aa).

Carbamoyl phosphate-binding residues include Arg-58 and Thr-59. Lys-86 contributes to the L-aspartate binding site. 3 residues coordinate carbamoyl phosphate: Arg-108, His-136, and Gln-139. Arg-169 and Arg-223 together coordinate L-aspartate. Carbamoyl phosphate is bound by residues Gly-264 and Pro-265.

It belongs to the aspartate/ornithine carbamoyltransferase superfamily. ATCase family. As to quaternary structure, heterododecamer (2C3:3R2) of six catalytic PyrB chains organized as two trimers (C3), and six regulatory PyrI chains organized as three dimers (R2).

The catalysed reaction is carbamoyl phosphate + L-aspartate = N-carbamoyl-L-aspartate + phosphate + H(+). The protein operates within pyrimidine metabolism; UMP biosynthesis via de novo pathway; (S)-dihydroorotate from bicarbonate: step 2/3. Its function is as follows. Catalyzes the condensation of carbamoyl phosphate and aspartate to form carbamoyl aspartate and inorganic phosphate, the committed step in the de novo pyrimidine nucleotide biosynthesis pathway. This is Aspartate carbamoyltransferase catalytic subunit from Halothermothrix orenii (strain H 168 / OCM 544 / DSM 9562).